A 199-amino-acid polypeptide reads, in one-letter code: Recombination protein RecR (199 aa).

The segment at 57 to 72 (CQSCRTYTEETLCPIC) adopts a C4-type zinc-finger fold. The 96-residue stretch at 81–176 (STICVVETPA…MISRIAHGVP (96 aa)) folds into the Toprim domain.

This sequence belongs to the RecR family.

Functionally, may play a role in DNA repair. It seems to be involved in an RecBC-independent recombinational process of DNA repair. It may act with RecF and RecO. This chain is Recombination protein RecR, found in Shewanella putrefaciens (strain CN-32 / ATCC BAA-453).